A 123-amino-acid polypeptide reads, in one-letter code: MAGVRLVFTKAFMVTVLLTLLLNIGVKPAEGQFSACNINDRPHRRGVCGSALADLVDFACSSSNQPAMVKRNAETDLDDPLRNIKLSSESALTYLTKRQGTTNIVCECCMKPCTLSELRQYCP.

An N-terminal signal peptide occupies residues 1-31; the sequence is MAGVRLVFTKAFMVTVLLTLLLNIGVKPAEG. The residue at position 32 (Gln-32) is a Pyrrolidone carboxylic acid. 3 cysteine pairs are disulfide-bonded: Cys-48–Cys-109, Cys-60–Cys-122, and Cys-108–Cys-113. Positions 68–69 are excised as a propeptide; sequence MV. Gln-99 bears the Pyrrolidone carboxylic acid mark.

Belongs to the insulin family. As to quaternary structure, heterodimer of a B chain and an A chain linked by two disulfide bonds. As to expression, expressed in the cerebral light-green cells which are giant neuroendocrines cells involved in the control of growth.

The protein localises to the cytoplasmic vesicle. The protein resides in the secretory vesicle. This chain is Molluscan insulin-related peptide 1, found in Lymnaea stagnalis (Great pond snail).